A 380-amino-acid chain; its full sequence is Protein COS12 (380 aa).

Residues 1-70 (MDGAKFENTV…WKIRGKRHYL (70 aa)) are Cytoplasmic-facing. The chain crosses the membrane as a helical span at residues 71 to 91 (VIVTALMFEVLYFLWTYSYIF). Residues 92–231 (RERTLGKQVS…KLLWAFKEVT (140 aa)) lie on the Extracellular side of the membrane. The helical transmembrane segment at 232–252 (IMNSRFAFFSIAYLNGLLTIP) threads the bilayer. Residues 253–257 (RLRNS) lie on the Cytoplasmic side of the membrane. A helical transmembrane segment spans residues 258 to 278 (LHILYVCAVLSSMIIEYLIGI). At 279 to 380 (DKFRFKSMNL…KEAQSACNDV (102 aa)) the chain is on the extracellular side.

Belongs to the DUP/COS family.

The protein localises to the membrane. This is Protein COS12 (COS12) from Saccharomyces cerevisiae (strain ATCC 204508 / S288c) (Baker's yeast).